A 314-amino-acid chain; its full sequence is Hydroxyethylthiazole kinase (314 aa).

A substrate-binding site is contributed by M70. ATP-binding residues include R145 and S217. Residue G244 coordinates substrate.

It belongs to the Thz kinase family. Mg(2+) is required as a cofactor.

The catalysed reaction is 5-(2-hydroxyethyl)-4-methylthiazole + ATP = 4-methyl-5-(2-phosphooxyethyl)-thiazole + ADP + H(+). It functions in the pathway cofactor biosynthesis; thiamine diphosphate biosynthesis; 4-methyl-5-(2-phosphoethyl)-thiazole from 5-(2-hydroxyethyl)-4-methylthiazole: step 1/1. Its function is as follows. Catalyzes the phosphorylation of the hydroxyl group of 4-methyl-5-beta-hydroxyethylthiazole (THZ). The polypeptide is Hydroxyethylthiazole kinase (Bifidobacterium longum (strain NCC 2705)).